Consider the following 148-residue polypeptide: 3-dehydroquinate dehydratase (148 aa).

The active-site Proton acceptor is tyrosine 26. Substrate contacts are provided by asparagine 75, histidine 81, and aspartate 88. Histidine 101 acts as the Proton donor in catalysis. Substrate-binding positions include 102-103 and arginine 112; that span reads LS.

Belongs to the type-II 3-dehydroquinase family. In terms of assembly, homododecamer.

It carries out the reaction 3-dehydroquinate = 3-dehydroshikimate + H2O. Its pathway is metabolic intermediate biosynthesis; chorismate biosynthesis; chorismate from D-erythrose 4-phosphate and phosphoenolpyruvate: step 3/7. In terms of biological role, catalyzes a trans-dehydration via an enolate intermediate. The polypeptide is 3-dehydroquinate dehydratase (Shewanella frigidimarina (strain NCIMB 400)).